The primary structure comprises 529 residues: MTQDHIVTERPPATRNDTAGNATARTYEVRTLGCLMNAHDSERMAGLLEDAGYIKADPGAPADLVVFNTCAVRENADNKLYGSLAHLAPIKASRPGMQIAVGGCLAQKDRHIVLDRAPWVDVVFGTHNIGSLPVLLERSRHNQDAQVEILESLRTFPSALPAARDSAYAAWVSISVGCNNSCTFCIVPSLRGKEADRRPGDILAEVQALVEQGVLEVTLLGQNVNSYGVNFADPDPSTGEEPLPRDRGAFAQLLRACGRIEGLERIRFTSPHPAEFTDDVILAMAETPAVCPHLHMPLQSGSDQILKAMRRSYRRDRYLGIIDKVRAAIPHAAITTDIIVGFPGETEHDFEQTLDVVQKARFTSAFTFQYSPRPGTPAADMPDQIPKNVVQQRFERLVALQERISLESNRSLVGTRQELLVVAGEGRKNATTARISGRARDGRLVHFRPDSADGSVRPGDLVDVEITDAAPHHLIADGPLLQHRRTPAGDASERGQTPTTRGVGLGVPRITVAQAQIPSSGTHPDTACR.

Residues 1–21 are disordered; sequence MTQDHIVTERPPATRNDTAGN. In terms of domain architecture, MTTase N-terminal spans 25–141; it reads RTYEVRTLGC…LPVLLERSRH (117 aa). Cysteine 34, cysteine 70, cysteine 104, cysteine 178, cysteine 182, and cysteine 185 together coordinate [4Fe-4S] cluster. The region spanning 164–407 is the Radical SAM core domain; that stretch reads RDSAYAAWVS…VALQERISLE (244 aa). The region spanning 410-480 is the TRAM domain; the sequence is RSLVGTRQEL…PHHLIADGPL (71 aa). Positions 481–504 are disordered; the sequence is LQHRRTPAGDASERGQTPTTRGVG.

Belongs to the methylthiotransferase family. MiaB subfamily. Monomer. It depends on [4Fe-4S] cluster as a cofactor.

It is found in the cytoplasm. The enzyme catalyses N(6)-dimethylallyladenosine(37) in tRNA + (sulfur carrier)-SH + AH2 + 2 S-adenosyl-L-methionine = 2-methylsulfanyl-N(6)-dimethylallyladenosine(37) in tRNA + (sulfur carrier)-H + 5'-deoxyadenosine + L-methionine + A + S-adenosyl-L-homocysteine + 2 H(+). Its function is as follows. Catalyzes the methylthiolation of N6-(dimethylallyl)adenosine (i(6)A), leading to the formation of 2-methylthio-N6-(dimethylallyl)adenosine (ms(2)i(6)A) at position 37 in tRNAs that read codons beginning with uridine. In Mycobacterium marinum (strain ATCC BAA-535 / M), this protein is tRNA-2-methylthio-N(6)-dimethylallyladenosine synthase 1.